A 257-amino-acid chain; its full sequence is MGLPGLGLLLKRFGVLVRVALKVAVGKVLLTLWPSAIRPHLLAMSEKTGMAKNPRFTYEDWAPTFFSTQYFWFVLKVNWQQLEDRTKQGDIAPDSPVVHLSGQRARLWDFMQGNRPLVLNFGSCSUPSFLFKFDQFKRLVEDFSSVADFLTVYIEEAHASDGWAFKNNVDIRRHRDLQERLQAARLLLDRNPGCPVVVDTMENRSSQLYAALPERLYVLQEGRILYKGGPGPWNYHPEEVHAVLEQLCRSSAQSPRL.

Residues 1-12 (MGLPGLGLLLKR) are Extracellular-facing. The helical; Signal-anchor for type III membrane protein transmembrane segment at 13–33 (FGVLVRVALKVAVGKVLLTLW) threads the bilayer. Over 34 to 257 (PSAIRPHLLA…CRSSAQSPRL (224 aa)) the chain is Cytoplasmic. Residue Sec-126 is part of the active site. A non-standard amino acid (selenocysteine) is located at residue Sec-126.

It belongs to the iodothyronine deiodinase family. As to quaternary structure, predominantly monomer. Can form homodimers but homodimerization is not essential for enzyme activity. Liver specific.

The protein resides in the cell membrane. Its subcellular location is the endoplasmic reticulum membrane. It localises to the basolateral cell membrane. The enzyme catalyses 3,3',5-triiodo-L-thyronine + iodide + A + H(+) = L-thyroxine + AH2. It carries out the reaction 3,3',5'-triiodo-L-thyronine + iodide + A + H(+) = L-thyroxine + AH2. The catalysed reaction is 3,3'-diiodo-L-thyronine + iodide + A + H(+) = 3,3',5'-triiodo-L-thyronine + AH2. It catalyses the reaction 3,3'-diiodo-L-thyronine + iodide + A + H(+) = 3,3',5-triiodo-L-thyronine + AH2. The enzyme catalyses 3'-iodo-L-thyronine + iodide + A + H(+) = 3',5'-diiodo-L-thyronine + AH2. It carries out the reaction 3-iodo-L-thyronine + iodide + A + H(+) = 3,5-diiodo-L-thyronine + AH2. The catalysed reaction is 3-iodo-L-thyronine + iodide + A + H(+) = 3,3'-diiodo-L-thyronine + AH2. It catalyses the reaction 3,3'-diiodothyronamine + iodide + A + H(+) = 3,3',5'-triiodothyronamine + AH2. The enzyme catalyses 3'-iodothyronamine + iodide + A + H(+) = 3',5'-diiodothyronamine + AH2. It carries out the reaction 3-iodothyronamine + iodide + A + H(+) = 3,3'-diiodothyronamine + AH2. The catalysed reaction is 3,3'-diiodothyronamine + iodide + A + H(+) = 3,3',5-triiodothyronamine + AH2. It catalyses the reaction 3-iodothyronamine + iodide + A + H(+) = 3,5-diiodothyronamine + AH2. The enzyme catalyses 3,3'-diiodo-L-thyronine sulfate + iodide + A + H(+) = 3,3',5'-triiodo-L-thyronine sulfate + AH2. It carries out the reaction 3,3',5'-triiodo-L-thyronine sulfate + iodide + A + H(+) = L-thyroxine sulfate + AH2. The catalysed reaction is 3,3'-diiodo-L-thyronine sulfate + iodide + A + H(+) = 3,3',5-triiodo-L-thyronine sulfate + AH2. In terms of biological role, plays a crucial role in the metabolism of thyroid hormones (TH) and has specific roles in TH activation and inactivation by deiodination. Catalyzes the deiodination of L-thyroxine (T4) to 3,5,3'-triiodothyronine (T3) and 3',5'-diiodothyronine (3',5'-T2) to 3'-monoiodothyronine (3'-T1) via outer-ring deiodination (ORD). Catalyzes the deiodination of T4 to 3,3',5'-triiodothyronine (rT3), T3 to 3,3'-diiodothyronine (3,3'-T2), 3,5-diiodothyronine (3,5-T2) to 3-monoiodothyronine (3-T1) and 3,3'-T2 to 3-T1 via inner-ring deiodination (IRD). Catalyzes the deiodination of rT3 to 3,3'-T2 via ORD. Catalyzes the phenolic ring deiodinations of 3,3',5'-triiodothyronamine, 3',5'-diiodothyronamine and 3,3'-diiodothyronamine as well as tyrosyl ring deiodinations of 3,5,3'-triiodothyronamine and 3,5-diiodothyronamine. Catalyzes the deiodination of L-thyroxine sulfate and 3,3',5-triiodo-L-thyronine sulfate via IRD and of 3,3',5'-triiodo-L-thyronine sulfate via ORD. This chain is Type I iodothyronine deiodinase (DIO1), found in Suncus murinus (Asian house shrew).